A 100-amino-acid polypeptide reads, in one-letter code: Dromyosuppressin (100 aa).

The first 24 residues, 1-24 (MSFAQFFVACCLAIVLLAVSNTRA), serve as a signal peptide directing secretion. Residues 25–84 (AVQGPPLCQSGIVEEMPPHIRKVCQALENSDQLTSALKSYINNEASALVANSDDLLKNYN) constitute a propeptide that is removed on maturation. Position 96 is a phenylalanine amide (phenylalanine 96).

Belongs to the myosuppressin family.

Its subcellular location is the secreted. Its function is as follows. Myoinhibiting neuropeptide. The polypeptide is Dromyosuppressin (Drosophila melanogaster (Fruit fly)).